The following is a 354-amino-acid chain: DNA polymerase IV (354 aa).

A UmuC domain is found at 6-187 (IIHIDCDCFY…LPVARLHGVG (182 aa)). 2 residues coordinate Mg(2+): Asp10 and Asp105. Residue Glu106 is part of the active site.

The protein belongs to the DNA polymerase type-Y family. Monomer. Mg(2+) is required as a cofactor.

It is found in the cytoplasm. It catalyses the reaction DNA(n) + a 2'-deoxyribonucleoside 5'-triphosphate = DNA(n+1) + diphosphate. In terms of biological role, poorly processive, error-prone DNA polymerase involved in untargeted mutagenesis. Copies undamaged DNA at stalled replication forks, which arise in vivo from mismatched or misaligned primer ends. These misaligned primers can be extended by PolIV. Exhibits no 3'-5' exonuclease (proofreading) activity. May be involved in translesional synthesis, in conjunction with the beta clamp from PolIII. This is DNA polymerase IV from Pseudomonas entomophila (strain L48).